A 602-amino-acid polypeptide reads, in one-letter code: UPF0329 protein ECU02_0060 (602 aa).

A compositionally biased stretch (basic and acidic residues) spans Glu313–Ser345. Positions Glu313–Glu407 are disordered. The span at Lys346–Lys356 shows a compositional bias: basic residues. The span at Gly357–Asp369 shows a compositional bias: basic and acidic residues. A compositionally biased stretch (acidic residues) spans Arg370–Val384.

It belongs to the UPF0329 family.

This chain is UPF0329 protein ECU02_0060, found in Encephalitozoon cuniculi (strain GB-M1) (Microsporidian parasite).